The chain runs to 280 residues: 2-dehydro-3-deoxyphosphooctonate aldolase (280 aa).

This sequence belongs to the KdsA family.

The protein resides in the cytoplasm. It carries out the reaction D-arabinose 5-phosphate + phosphoenolpyruvate + H2O = 3-deoxy-alpha-D-manno-2-octulosonate-8-phosphate + phosphate. Its pathway is carbohydrate biosynthesis; 3-deoxy-D-manno-octulosonate biosynthesis; 3-deoxy-D-manno-octulosonate from D-ribulose 5-phosphate: step 2/3. The protein operates within bacterial outer membrane biogenesis; lipopolysaccharide biosynthesis. The protein is 2-dehydro-3-deoxyphosphooctonate aldolase of Coxiella burnetii (strain Dugway 5J108-111).